Reading from the N-terminus, the 75-residue chain is Large ribosomal subunit protein bL31 (75 aa).

In terms of assembly, part of the 50S ribosomal subunit.

In terms of biological role, binds the 23S rRNA. This Rhodopseudomonas palustris (strain ATCC BAA-98 / CGA009) protein is Large ribosomal subunit protein bL31.